The following is a 277-amino-acid chain: Probable endonuclease 4 (277 aa).

Residues H69, H109, E145, D179, H182, H214, D227, H229, and E259 each coordinate Zn(2+).

It belongs to the AP endonuclease 2 family. The cofactor is Zn(2+).

It catalyses the reaction Endonucleolytic cleavage to 5'-phosphooligonucleotide end-products.. Its function is as follows. Endonuclease IV plays a role in DNA repair. It cleaves phosphodiester bonds at apurinic or apyrimidinic (AP) sites, generating a 3'-hydroxyl group and a 5'-terminal sugar phosphate. In Bacteroides thetaiotaomicron (strain ATCC 29148 / DSM 2079 / JCM 5827 / CCUG 10774 / NCTC 10582 / VPI-5482 / E50), this protein is Probable endonuclease 4.